Reading from the N-terminus, the 91-residue chain is Sec-independent protein translocase protein TatA (91 aa).

A helical membrane pass occupies residues 3–23 (FFGIGLPEMLVILAIALLVFG). The interval 57-91 (DRTPATPAEATVEPPVLDSAPTEAVTVEKQTETQV) is disordered. The segment covering 59-72 (TPATPAEATVEPPV) has biased composition (low complexity).

Belongs to the TatA/E family. In terms of assembly, forms a complex with TatC.

It is found in the cell inner membrane. Functionally, part of the twin-arginine translocation (Tat) system that transports large folded proteins containing a characteristic twin-arginine motif in their signal peptide across membranes. TatA could form the protein-conducting channel of the Tat system. This is Sec-independent protein translocase protein TatA from Synechococcus elongatus (strain ATCC 33912 / PCC 7942 / FACHB-805) (Anacystis nidulans R2).